Here is a 325-residue protein sequence, read N- to C-terminus: Glutarate 2-hydroxylase (325 aa).

Residues His160, Asp162, and His292 each contribute to the Fe cation site.

Belongs to the glutarate hydroxylase family. Homotetramer. It depends on Fe(2+) as a cofactor.

The catalysed reaction is glutarate + 2-oxoglutarate + O2 = (S)-2-hydroxyglutarate + succinate + CO2. It participates in amino-acid degradation. Acts as an alpha-ketoglutarate-dependent dioxygenase catalyzing hydroxylation of glutarate (GA) to L-2-hydroxyglutarate (L2HG). Functions in a L-lysine degradation pathway that proceeds via cadaverine, glutarate and L-2-hydroxyglutarate. This chain is Glutarate 2-hydroxylase, found in Salmonella newport (strain SL254).